We begin with the raw amino-acid sequence, 924 residues long: MMMENGLSMEYGDGYMEQEEEWEREGLLDPAWEKQQKKTFTAWCNSHLRKAGTAIDNIEEDFRNGLKLMLLLEVISGETLPKPDRGKMRFHKIANVNKALDFIASKGVHLVSIGAEEIVDGNLKMTLGMIWTIILRFAIQDISVEEMTAKEGLLLWCQRKTAPYKNVNVQNFHLSFKDGLAFCALIHRHRPDLIDYAKLSKDNPLENLNTAFDVAEKYLDIPRMLDPDDLINTPKPDERAIMTYVSCYYHAFQGAQQVGNNTALPDERAVMTYVSSYYHCFSGAQKAETAANRICKVLKVNQENERLMEEYERLASDLLEWIRRTMPWLNSRQADNSLAGVQKKLEEYRTYRRKHKPPRVEQKAKLETNFNTLQTKLRLSNRPAYLPTEGKTVSDISNSWKGLELAEKAFEEWLLAETMRLERLEHLAQKFKHKADAHEDWTRGKEEMLQSQDFRQCKLNELKALKKKHEAFESDLAAHQDRVEQIAAIAQELNTLEYHDCVSVNARCQRICDQWDRLGALTQRRRTALDEAERILEKIDILHLEFAKRAAPFNNWLDGTREDLVDMFIVHTMEEIQGLIQAHDQFKATLGEADKEFNLIVNLVREVESIVKQHQIPGGLENPYTTLTANDMTRKWSDVRQLVPQRDQTLANELRKQQNNEMLRRQFAEKANIVGPWIERQMDAVTAIGMGLQGSLEDQLHRLKEYEQAVYAYKPNIEELEKIHQAVQESMIFENRYTNYTMETLRVGWEQLLTSINRNINEVENQILTRDSKGISQEQLNEFRSSFNHFDKNRTGRLSPEEFKSCLVSLGYSIGKDRQGDLDFQRILAVVDPNNTGYVHFDAFLDFMTRESTDTDTAEQVIDSFRILAADKPYILPDELRRELPPDQAEYCIQRMPPYKGPNGVPGALDYMSFSTALYGETDL.

The tract at residues Met1–His250 is actin-binding. Calponin-homology (CH) domains are found at residues Lys34–Ala138 and Met147–Gln253. 4 Spectrin repeats span residues Ala251–Asp395, Ile396–Arg510, Ile511–Asp631, and Met632–Thr744. EF-hand domains are found at residues Glu778–Ser813 and Gln819–Asp854. The Ca(2+) site is built by Asp791, Asn793, Thr795, Arg797, and Glu802.

The protein belongs to the alpha-actinin family. Homodimer; antiparallel. Interacts with Smn; the interaction occurs in adult thoracic tissues. Larval muscle isoform is expressed in the larval body wall, adult muscles of the head and abdomen and supercontractile muscles of the larva and adult. Adult muscle isoform accumulates within adult fibrillar and tubular muscles.

The protein localises to the cytoplasm. Its subcellular location is the myofibril. It localises to the sarcomere. It is found in the z line. In terms of biological role, F-actin cross-linking protein which is thought to anchor actin to a variety of intracellular structures. This is a bundling protein. The protein is Alpha-actinin, sarcomeric (Actn) of Drosophila melanogaster (Fruit fly).